Consider the following 200-residue polypeptide: LexA repressor (200 aa).

Positions 28-48 (RAEIAQHFGFSSPNAAEQHLK) form a DNA-binding region, H-T-H motif. Active-site for autocatalytic cleavage activity residues include Ser117 and Lys154.

Belongs to the peptidase S24 family. In terms of assembly, homodimer.

It carries out the reaction Hydrolysis of Ala-|-Gly bond in repressor LexA.. In terms of biological role, represses a number of genes involved in the response to DNA damage (SOS response), including recA and lexA. In the presence of single-stranded DNA, RecA interacts with LexA causing an autocatalytic cleavage which disrupts the DNA-binding part of LexA, leading to derepression of the SOS regulon and eventually DNA repair. The chain is LexA repressor from Thiobacillus denitrificans (strain ATCC 25259 / T1).